We begin with the raw amino-acid sequence, 390 residues long: Na(+)/H(+) antiporter NhaA 2 (390 aa).

11 helical membrane-spanning segments follow: residues 23–43 (IVLI…LAAA), 63–83 (LHLW…GLEI), 100–120 (LPVL…LAIT), 129–149 (GWAI…ALVG), 158–178 (LFLL…IALF), 181–201 (SGLK…LVLV), 208–228 (ALLP…HSGI), 265–285 (GFVI…GADF), 293–313 (LGIA…SILV), 331–351 (LWGI…IAGL), and 362–382 (EAKL…LLVL).

It belongs to the NhaA Na(+)/H(+) (TC 2.A.33) antiporter family.

The protein localises to the cell inner membrane. The enzyme catalyses Na(+)(in) + 2 H(+)(out) = Na(+)(out) + 2 H(+)(in). In terms of biological role, na(+)/H(+) antiporter that extrudes sodium in exchange for external protons. This is Na(+)/H(+) antiporter NhaA 2 from Novosphingobium aromaticivorans (strain ATCC 700278 / DSM 12444 / CCUG 56034 / CIP 105152 / NBRC 16084 / F199).